The sequence spans 209 residues: Large ribosomal subunit protein uL4 (209 aa).

The segment at 46-76 is disordered; the sequence is RGTASTKTRGEVSGGGRKPWRQKGTGRARHG. Positions 63–76 are enriched in basic residues; it reads KPWRQKGTGRARHG.

This sequence belongs to the universal ribosomal protein uL4 family. In terms of assembly, part of the 50S ribosomal subunit.

Its function is as follows. One of the primary rRNA binding proteins, this protein initially binds near the 5'-end of the 23S rRNA. It is important during the early stages of 50S assembly. It makes multiple contacts with different domains of the 23S rRNA in the assembled 50S subunit and ribosome. Functionally, forms part of the polypeptide exit tunnel. The sequence is that of Large ribosomal subunit protein uL4 from Halothermothrix orenii (strain H 168 / OCM 544 / DSM 9562).